The following is a 355-amino-acid chain: Guanine nucleotide-binding protein alpha-2 subunit (355 aa).

Residues 1–20 are disordered; it reads MCFGGRGKDDEAEASRSREL. The G-alpha domain maps to 33–355; that stretch reads KEVKLLLLGA…IQRNLKQLIL (323 aa). A G1 motif region spans residues 36-49; sequence KLLLLGAGESGKST. Glu44, Ser45, Gly46, Lys47, Ser48, Thr49, Asp151, Leu176, Thr182, Gly204, Asn270, Lys271, Asp273, and Ala328 together coordinate GTP. Ser48 is a Mg(2+) binding site. A G2 motif region spans residues 174–182; sequence DLLRSRLRT. A Mg(2+)-binding site is contributed by Thr182. The segment at 197-206 is G3 motif; the sequence is YRMFDVGGQR. Positions 266–273 are G4 motif; it reads ILFLNKID. The segment at 326–331 is G5 motif; sequence TNATDT.

Belongs to the G-alpha family. G(q) subfamily. As to quaternary structure, g proteins are composed of 3 units; alpha, beta and gamma. The alpha chain contains the guanine nucleotide binding site. The cofactor is Mg(2+).

Functionally, guanine nucleotide-binding proteins (G proteins) are involved as modulators or transducers in various transmembrane signaling systems. In Neurospora crassa (strain ATCC 24698 / 74-OR23-1A / CBS 708.71 / DSM 1257 / FGSC 987), this protein is Guanine nucleotide-binding protein alpha-2 subunit (gna-2).